Reading from the N-terminus, the 3912-residue chain is Chondramide synthase cmdD (3912 aa).

The region spanning 1411 to 1485 is the Carrier 1 domain; the sequence is APRNAREETL…ALAEVASASK (75 aa). O-(pantetheine 4'-phosphoryl)serine is present on serine 1446. Acidic residues predominate over residues 1995–2029; that stretch reads ADEDDEEDDELDEEFDAEVDEEDEDEEEEEDDDGE. Positions 1995–2030 are disordered; it reads ADEDDEEDDELDEEFDAEVDEEDEDEEEEEDDDGEN. The Carrier 2 domain maps to 2989-3064; the sequence is APRTATEETL…VLARVIDEAL (76 aa). Serine 3024 is subject to O-(pantetheine 4'-phosphoryl)serine.

Belongs to the ATP-dependent AMP-binding enzyme family. Pantetheine 4'-phosphate serves as cofactor.

Its function is as follows. Involved in the synthesis of chondramides. Activates R-beta-tyrosine and probably phenylalanine. In Chondromyces crocatus, this protein is Chondramide synthase cmdD.